Consider the following 423-residue polypeptide: Kynureninase (423 aa).

Pyridoxal 5'-phosphate is bound by residues Leu105, Ser106, 133-136, Asp218, His221, and Tyr243; that span reads FPSD. Lys244 carries the post-translational modification N6-(pyridoxal phosphate)lysine. Residues Trp273 and Asn301 each coordinate pyridoxal 5'-phosphate.

It belongs to the kynureninase family. Homodimer. It depends on pyridoxal 5'-phosphate as a cofactor.

It catalyses the reaction L-kynurenine + H2O = anthranilate + L-alanine + H(+). The enzyme catalyses 3-hydroxy-L-kynurenine + H2O = 3-hydroxyanthranilate + L-alanine + H(+). It functions in the pathway amino-acid degradation; L-kynurenine degradation; L-alanine and anthranilate from L-kynurenine: step 1/1. Its pathway is cofactor biosynthesis; NAD(+) biosynthesis; quinolinate from L-kynurenine: step 2/3. Catalyzes the cleavage of L-kynurenine (L-Kyn) and L-3-hydroxykynurenine (L-3OHKyn) into anthranilic acid (AA) and 3-hydroxyanthranilic acid (3-OHAA), respectively. The polypeptide is Kynureninase (Xanthomonas axonopodis pv. citri (strain 306)).